The sequence spans 681 residues: Structure-specific endonuclease subunit SLX4 (681 aa).

Disordered regions lie at residues 239–305 (EREK…QEQL) and 505–528 (EVTG…NENL). Over residues 251–261 (SDSSPEPTQLL) the composition is skewed to polar residues. The span at 265-281 (IIEEEHEVDEEEEDNEN) shows a compositional bias: acidic residues. Polar residues-rich tracts occupy residues 288–305 (QLAS…QEQL) and 518–528 (QVPSSPGNENL).

The protein belongs to the SLX4 family. As to quaternary structure, forms a heterodimer with SLX1. Post-translationally, phosphorylated in response to DNA damage.

The protein resides in the nucleus. Regulatory subunit of the SLX1-SLX4 structure-specific endonuclease that resolves DNA secondary structures generated during DNA repair and recombination. Has endonuclease activity towards branched DNA substrates, introducing single-strand cuts in duplex DNA close to junctions with ss-DNA. The polypeptide is Structure-specific endonuclease subunit SLX4 (Meyerozyma guilliermondii (strain ATCC 6260 / CBS 566 / DSM 6381 / JCM 1539 / NBRC 10279 / NRRL Y-324) (Yeast)).